Here is a 166-residue protein sequence, read N- to C-terminus: NAD(P)H-quinone oxidoreductase subunit I, chloroplastic (166 aa).

2 consecutive 4Fe-4S ferredoxin-type domains span residues 55–84 (GRIH…VDWK) and 95–124 (LNYS…MTEE). [4Fe-4S] cluster-binding residues include Cys64, Cys67, Cys70, Cys74, Cys104, Cys107, Cys110, and Cys114.

The protein belongs to the complex I 23 kDa subunit family. NDH is composed of at least 16 different subunits, 5 of which are encoded in the nucleus. [4Fe-4S] cluster serves as cofactor.

The protein resides in the plastid. It is found in the chloroplast thylakoid membrane. It catalyses the reaction a plastoquinone + NADH + (n+1) H(+)(in) = a plastoquinol + NAD(+) + n H(+)(out). The catalysed reaction is a plastoquinone + NADPH + (n+1) H(+)(in) = a plastoquinol + NADP(+) + n H(+)(out). NDH shuttles electrons from NAD(P)H:plastoquinone, via FMN and iron-sulfur (Fe-S) centers, to quinones in the photosynthetic chain and possibly in a chloroplast respiratory chain. The immediate electron acceptor for the enzyme in this species is believed to be plastoquinone. Couples the redox reaction to proton translocation, and thus conserves the redox energy in a proton gradient. In Palafoxia arida (Spanish needles), this protein is NAD(P)H-quinone oxidoreductase subunit I, chloroplastic.